We begin with the raw amino-acid sequence, 525 residues long: MSEAEYLTQEDFLQRSNKLQEISDLGINPYPYEFPGTSSVEEIKQEYASQTLGNSEDATNKKTPKVKISGRMVLFRSMGKNAFAQILDNDQKIQVMFNRDFSSVAGLPEDAEISPIKFIEKKLDLGDILGIEGYLFFTHSGELTILVETVTLLCKALISLPDKHAGLSDKEIRYRKRWLDLISSDEVRQTFFKRSRIIKLIRQYMDAQGFMEVETPILQNIYGGAEATPFVTTLNALHSEVFLRISLEIALKKILVGGTSRVYEIGKVFRNEGIDRTHNPEFTMIEAYAANVDYHSVMTYVENLVEYLVCALNDGSTVLTYSHLKQGPQTVDFKAPWIRMTMKDSIKTYGDVDVDLHADHELRNILKERTSLPEESYATAPRGLLITALFDELVCDKLIAPHHITDHPIETTPLCKSLRSGDADFVERFESFCLGKELCNAYSELNDPLHQRMLLEKQMEKKALDPDSEYHPIDEEFLEALCQGMPPAGGFGIGIDRLVMILTDAASIRDVLYFPAMRRLESENN.

Residues E430 and E437 each coordinate Mg(2+).

The protein belongs to the class-II aminoacyl-tRNA synthetase family. Homodimer. The cofactor is Mg(2+).

The protein localises to the cytoplasm. The catalysed reaction is tRNA(Lys) + L-lysine + ATP = L-lysyl-tRNA(Lys) + AMP + diphosphate. The chain is Lysine--tRNA ligase from Chlamydia caviae (strain ATCC VR-813 / DSM 19441 / 03DC25 / GPIC) (Chlamydophila caviae).